A 205-amino-acid polypeptide reads, in one-letter code: Cryptic plasmid protein C (205 aa).

Residues 142 to 205 form a disordered region; the sequence is THGYSDPDDP…RAGNAGKGRF (64 aa). Positions 155–174 are enriched in polar residues; the sequence is QSMTQAKDLPRNTQEAAQSI. Residues 189–205 are compositionally biased toward basic residues; sequence QAKKPRRRAGNAGKGRF.

The polypeptide is Cryptic plasmid protein C (cppC) (Neisseria gonorrhoeae).